The following is a 368-amino-acid chain: Histidinol-phosphate aminotransferase (368 aa).

K215 is subject to N6-(pyridoxal phosphate)lysine.

It belongs to the class-II pyridoxal-phosphate-dependent aminotransferase family. Histidinol-phosphate aminotransferase subfamily. In terms of assembly, homodimer. Pyridoxal 5'-phosphate serves as cofactor.

It catalyses the reaction L-histidinol phosphate + 2-oxoglutarate = 3-(imidazol-4-yl)-2-oxopropyl phosphate + L-glutamate. It participates in amino-acid biosynthesis; L-histidine biosynthesis; L-histidine from 5-phospho-alpha-D-ribose 1-diphosphate: step 7/9. The sequence is that of Histidinol-phosphate aminotransferase from Buchnera aphidicola subsp. Acyrthosiphon pisum (strain 5A).